The following is a 461-amino-acid chain: Smoothelin-like protein 2 (461 aa).

The stretch at 55–88 (PLARTVADLQRDNQRLQAQLERLTRQVEALGLAS) forms a coiled coil. 2 disordered regions span residues 87-193 (ASGM…LRLP) and 227-248 (LNPS…KNSS). Residues 94–107 (PGTPGTPSPPPAPG) show a composition bias toward pro residues. At T96 the chain carries Phosphothreonine. Residues S101, S129, and S134 each carry the phosphoserine modification. Residues 134–147 (SLDHDEASESEMRK) are compositionally biased toward basic and acidic residues. Phosphoserine is present on residues S256 and S269. Residues 260–307 (AVTASKHSNSPPLVTPPQSPVSPQPPAITQVHRQGERRRELVRSQTLP) are disordered. The span at 272 to 285 (LVTPPQSPVSPQPP) shows a compositional bias: pro residues. Residue T274 is modified to Phosphothreonine. S278 is modified (phosphoserine). The span at 292 to 301 (RQGERRRELV) shows a compositional bias: basic and acidic residues. A Phosphoserine modification is found at S344. The Calponin-homology (CH) domain maps to 351–458 (SSIKQILLEW…YVQSLYNHLR (108 aa)).

The protein belongs to the smoothelin family.

The protein is Smoothelin-like protein 2 (SMTNL2) of Homo sapiens (Human).